We begin with the raw amino-acid sequence, 642 residues long: Medium-chain-fatty-acid--[acyl-carrier-protein] ligase TtuA (642 aa).

It belongs to the ATP-dependent AMP-binding enzyme family.

It carries out the reaction a medium-chain fatty acid + holo-[ACP] + ATP = a medium-chain fatty acyl-[ACP] + AMP + diphosphate. The enzyme catalyses a medium-chain fatty acid + ATP + H(+) = a medium-chain fatty acyl-AMP + diphosphate. The catalysed reaction is a medium-chain fatty acyl-AMP + holo-[ACP] = a medium-chain fatty acyl-[ACP] + AMP + H(+). It catalyses the reaction decanoate + holo-[ACP] + ATP = decanoyl-[ACP] + AMP + diphosphate. It carries out the reaction decanoate + ATP + H(+) = decanoyl-AMP + diphosphate. The enzyme catalyses decanoyl-AMP + holo-[ACP] = decanoyl-[ACP] + AMP + H(+). Its function is as follows. Ligase likely involved in the biosynthesis of a polyyne metabolite. Catalyzes the activation of decanoic acid, followed by the loading of the activated decanoic acid onto the acyl carrier protein TtuC. Decanoic acid is the preferred substrate, but it can also use 10-undecenoic acid and lauric acid. Nonanoic acid and 7-octenoic acid are only weakly activated. This is Medium-chain-fatty-acid--[acyl-carrier-protein] ligase TtuA from Teredinibacter turnerae (strain ATCC 39867 / T7901).